The sequence spans 125 residues: NADPH-dependent 7-cyano-7-deazaguanine reductase (125 aa).

Cysteine 41 functions as the Thioimide intermediate in the catalytic mechanism. The active-site Proton donor is the aspartate 48. Substrate is bound by residues 63 to 65 (IEL) and 82 to 83 (HE).

This sequence belongs to the GTP cyclohydrolase I family. QueF type 1 subfamily.

The protein localises to the cytoplasm. The enzyme catalyses 7-aminomethyl-7-carbaguanine + 2 NADP(+) = 7-cyano-7-deazaguanine + 2 NADPH + 3 H(+). It functions in the pathway tRNA modification; tRNA-queuosine biosynthesis. Its function is as follows. Catalyzes the NADPH-dependent reduction of 7-cyano-7-deazaguanine (preQ0) to 7-aminomethyl-7-deazaguanine (preQ1). This is NADPH-dependent 7-cyano-7-deazaguanine reductase from Sulfurovum sp. (strain NBC37-1).